Reading from the N-terminus, the 674-residue chain is Metal-nicotianamine transporter YSL2 (674 aa).

The tract at residues 1 to 29 (MEAAAPEIERCDAGDVESDHDGAAAAAER) is disordered. Positions 7 to 22 (EIERCDAGDVESDHDG) are enriched in basic and acidic residues. Helical transmembrane passes span 41–61 (GMVA…KLAL), 64–84 (GIIP…LRGW), 118–138 (CAVA…LLAL), 162–182 (GVGW…LNLL), 224–244 (GFLN…FYTG), 283–303 (LVNL…WPLI), 329–349 (FMCV…VTGI), 392–412 (LAYA…PIMF), 420–440 (VVVA…GTGL), 452–472 (IALF…AGLV), 506–526 (VGQA…FLLF), 559–579 (SALP…SVLI), 604–624 (FLVG…VFAW), and 633–653 (ALLV…WMFP).

This sequence belongs to the YSL (TC 2.A.67.2) family. Expressed in phloem cells of vascular bundles in leaves and leaf sheaths. Expressed at low levels in phloem companion cells in the central cylinder of roots, but not in the epidermal or cortical cells.

The protein resides in the cell membrane. In terms of biological role, involved in the phloem transport of iron and manganese and their translocation into the grain. Transports iron- and manganese-nicotianamine chelates, but not iron-phytosiderophore. The protein is Metal-nicotianamine transporter YSL2 (YSL2) of Oryza sativa subsp. japonica (Rice).